The chain runs to 407 residues: Imidazolonepropionase (407 aa).

His-68 and His-70 together coordinate Fe(3+). 2 residues coordinate Zn(2+): His-68 and His-70. 4-imidazolone-5-propanoate contacts are provided by Arg-77, Tyr-140, and His-173. Tyr-140 serves as a coordination point for N-formimidoyl-L-glutamate. His-238 lines the Fe(3+) pocket. Zn(2+) is bound at residue His-238. Gln-241 is a 4-imidazolone-5-propanoate binding site. Residue Asp-313 coordinates Fe(3+). Residue Asp-313 participates in Zn(2+) binding. N-formimidoyl-L-glutamate is bound by residues Asn-315 and Gly-317. 4-imidazolone-5-propanoate is bound at residue Thr-318.

Belongs to the metallo-dependent hydrolases superfamily. HutI family. The cofactor is Zn(2+). Requires Fe(3+) as cofactor.

It localises to the cytoplasm. It catalyses the reaction 4-imidazolone-5-propanoate + H2O = N-formimidoyl-L-glutamate. It functions in the pathway amino-acid degradation; L-histidine degradation into L-glutamate; N-formimidoyl-L-glutamate from L-histidine: step 3/3. Catalyzes the hydrolytic cleavage of the carbon-nitrogen bond in imidazolone-5-propanoate to yield N-formimidoyl-L-glutamate. It is the third step in the universal histidine degradation pathway. This Burkholderia ambifaria (strain MC40-6) protein is Imidazolonepropionase.